Reading from the N-terminus, the 200-residue chain is Eukaryotic translation initiation factor isoform 4E (200 aa).

The segment at Met-1–Ala-22 is disordered. MRNA is bound by residues Gln-44–Gly-49, Lys-76, and Trp-94–Glu-95. A disulfide bridge connects residues Cys-99 and Cys-138. MRNA contacts are provided by residues Arg-145–Lys-150 and Lys-189–Arg-192.

This sequence belongs to the eukaryotic initiation factor 4E family. EIF4F is a multi-subunit complex, the composition of which varies with external and internal environmental conditions. It is composed of at least EIF4A, EIF4E and EIF4G. EIF4E is also known to interact with other partners. In higher plants two isoforms of EIF4F have been identified, named isoform EIF4F and isoform EIF(iso)4F. Isoform EIF4F has subunits p220 and p26, whereas isoform EIF(iso)4F has subunits p82 and p28. In terms of assembly, (Microbial infection) Interacts with viral genome-linked protein (VPg); this interaction is possible in susceptible hosts but impaired in resistant plants. Post-translationally, according to the redox status, the Cys-99-Cys-138 disulfide bridge may have a role in regulating protein function by affecting its ability to bind capped mRNA. Expressed ubiquitously in seedlings, roots, leaves, sepals, petals, anthers and dehisced pollen, with highest levels in pollen, maturing anthers and roots. Strongly expressed in susceptible plants but not in resistant ones.

Its subcellular location is the cytoplasm. The protein localises to the nucleus. In terms of biological role, component of the protein complex eIF4F, which is involved in the recognition of the mRNA cap, ATP-dependent unwinding of 5'-terminal secondary structure and recruitment of mRNA to the ribosome. Recognizes and binds the 7-methylguanosine-containing mRNA cap during an early step in the initiation of protein synthesis and facilitates ribosome binding by inducing the unwinding of the mRNAs secondary structures. Key component of recessive resistance to potyviruses. (Microbial infection) Susceptibility host factor required for viral infection (e.g. potato virus Y (PVY) and pepper mottle virus (PepMoV)) by recruiting viral RNAs to the host ribosomal complex via an interaction with viral genome-linked protein (VPg). This Nicotiana tabacum (Common tobacco) protein is Eukaryotic translation initiation factor isoform 4E.